Reading from the N-terminus, the 239-residue chain is Ribonuclease HII (239 aa).

The 192-residue stretch at 30–221 folds into the RNase H type-2 domain; the sequence is GPVAGVDEVG…VRRVANGSGG (192 aa). Residues aspartate 36, glutamate 37, and aspartate 130 each coordinate a divalent metal cation.

Belongs to the RNase HII family. Mn(2+) is required as a cofactor. It depends on Mg(2+) as a cofactor.

Its subcellular location is the cytoplasm. It carries out the reaction Endonucleolytic cleavage to 5'-phosphomonoester.. In terms of biological role, endonuclease that specifically degrades the RNA of RNA-DNA hybrids. This Mycolicibacterium paratuberculosis (strain ATCC BAA-968 / K-10) (Mycobacterium paratuberculosis) protein is Ribonuclease HII.